The chain runs to 1213 residues: DNA-directed RNA polymerase subunit beta' (1213 aa).

Zn(2+)-binding residues include Cys60, Cys62, Cys75, and Cys78. Asp450, Asp452, and Asp454 together coordinate Mg(2+). Zn(2+)-binding residues include Cys819, Cys893, Cys900, and Cys903.

This sequence belongs to the RNA polymerase beta' chain family. As to quaternary structure, the RNAP catalytic core consists of 2 alpha, 1 beta, 1 beta' and 1 omega subunit. When a sigma factor is associated with the core the holoenzyme is formed, which can initiate transcription. Requires Mg(2+) as cofactor. Zn(2+) is required as a cofactor.

The enzyme catalyses RNA(n) + a ribonucleoside 5'-triphosphate = RNA(n+1) + diphosphate. DNA-dependent RNA polymerase catalyzes the transcription of DNA into RNA using the four ribonucleoside triphosphates as substrates. The protein is DNA-directed RNA polymerase subunit beta' of Streptococcus pyogenes serotype M18 (strain MGAS8232).